Consider the following 885-residue polypeptide: Eukaryotic translation initiation factor 3 subunit C (885 aa).

Residues 1 to 81 (MSFFAKLQGS…SDSDDERQAV (81 aa)) form a disordered region. A compositionally biased stretch (low complexity) spans 9 to 28 (GSDSESSSGSESEESILSGS). Residues 55–76 (EESESEEESSDEDEEEMSDSDD) show a composition bias toward acidic residues. The region spanning 624–797 (FHMHLNVELL…GVVIFHRVEQ (174 aa)) is the PCI domain. A disordered region spans residues 822-885 (LDVKLGNQGQ…TTMGRRVTAQ (64 aa)). Residues 855-872 (RGTYRGRGGRGGRGGFNQ) show a composition bias toward gly residues.

This sequence belongs to the eIF-3 subunit C family. As to quaternary structure, component of the eukaryotic translation initiation factor 3 (eIF-3) complex.

It is found in the cytoplasm. Its function is as follows. Component of the eukaryotic translation initiation factor 3 (eIF-3) complex, which is involved in protein synthesis of a specialized repertoire of mRNAs and, together with other initiation factors, stimulates binding of mRNA and methionyl-tRNAi to the 40S ribosome. The eIF-3 complex specifically targets and initiates translation of a subset of mRNAs involved in cell proliferation. This Cryptococcus neoformans var. neoformans serotype D (strain B-3501A) (Filobasidiella neoformans) protein is Eukaryotic translation initiation factor 3 subunit C.